A 482-amino-acid chain; its full sequence is Probable F-box protein At1g30780 (482 aa).

The F-box domain maps to 230–280; it reads EIDLDSLPFDLKMVILTRLSAKSLTNFKRVSKMWSSIIGSQRFIDSFFTMS.

The protein is Probable F-box protein At1g30780 of Arabidopsis thaliana (Mouse-ear cress).